Here is an 813-residue protein sequence, read N- to C-terminus: Leucine--tRNA ligase (813 aa).

The 'HIGH' region signature appears at 42 to 52 (PYTSGNLHIGH). Residues 580–584 (KMSKS) carry the 'KMSKS' region motif. K583 is an ATP binding site.

Belongs to the class-I aminoacyl-tRNA synthetase family.

It localises to the cytoplasm. It catalyses the reaction tRNA(Leu) + L-leucine + ATP = L-leucyl-tRNA(Leu) + AMP + diphosphate. This Dehalococcoides mccartyi (strain ATCC BAA-2100 / JCM 16839 / KCTC 5957 / BAV1) protein is Leucine--tRNA ligase.